Here is a 526-residue protein sequence, read N- to C-terminus: Chaperonin GroEL 2 (526 aa).

The ATP site is built by K50, G413, and D494.

It belongs to the chaperonin (HSP60) family. Forms a cylinder of 14 subunits composed of two heptameric rings stacked back-to-back. Interacts with the co-chaperonin GroES.

It localises to the cytoplasm. It carries out the reaction ATP + H2O + a folded polypeptide = ADP + phosphate + an unfolded polypeptide.. Functionally, together with its co-chaperonin GroES, plays an essential role in assisting protein folding. The GroEL-GroES system forms a nano-cage that allows encapsulation of the non-native substrate proteins and provides a physical environment optimized to promote and accelerate protein folding. This Chlamydia pneumoniae (Chlamydophila pneumoniae) protein is Chaperonin GroEL 2.